A 227-amino-acid polypeptide reads, in one-letter code: PKHD-type hydroxylase ABSDF3031 (227 aa).

The region spanning 78 to 178 (KIIPPLFNRY…RFASFFWVQS (101 aa)) is the Fe2OG dioxygenase domain. His96, Asp98, and His159 together coordinate Fe cation. Arg169 lines the 2-oxoglutarate pocket.

It depends on Fe(2+) as a cofactor. L-ascorbate serves as cofactor.

The chain is PKHD-type hydroxylase ABSDF3031 from Acinetobacter baumannii (strain SDF).